The following is an 801-amino-acid chain: Phosphatidylinositol 3-kinase pik3 (801 aa).

Residues 14–166 form the C2 PI3K-type domain; that stretch reads VTARFLVKFC…RLDGLLLKLQ (153 aa). Residues 257-439 form the PIK helical domain; the sequence is DKDLKPNSKI…SSVMFLFQKE (183 aa). Residues 515–785 enclose the PI3K/PI4K catalytic domain; the sequence is IPDACTVFKS…LINDSVSALF (271 aa). The G-loop stretch occupies residues 521–527; the sequence is VFKSTMQ. The segment at 654–662 is catalytic loop; sequence GVGDRHLDN. Residues 673–694 form an activation loop region; it reads HADFGYILGRDPKLFSPAMKLS.

Belongs to the PI3/PI4-kinase family. Component of the autophagy-specific vps34 PI3-kinase complex I composed of vps15, atg6, pik3/vps34, atg14 and atg38. Also a component of the VPS34 PI3-kinase complex II composed of atg6, pik3, vps15 and vps38.

It carries out the reaction a 1,2-diacyl-sn-glycero-3-phospho-(1D-myo-inositol) + ATP = a 1,2-diacyl-sn-glycero-3-phospho-(1D-myo-inositol-3-phosphate) + ADP + H(+). Its function is as follows. Phosphatidylinositol 3-kinase that functions as a part of the autophagy-specific VPS34 PI3-kinase complex I that plays a role in autophagosome assembly. This complex is essential to recruit the atg8-phosphatidylinositol conjugate and the atg12-atg5 conjugate to the pre-autophagosomal structure. Also functions as part of the VPS34 PI3-kinase complex II. This is Phosphatidylinositol 3-kinase pik3 (pik3) from Schizosaccharomyces pombe (strain 972 / ATCC 24843) (Fission yeast).